We begin with the raw amino-acid sequence, 325 residues long: Tartrate-resistant acid phosphatase type 5 (325 aa).

Residues methionine 1–glycine 21 form the signal peptide. N-linked (GlcNAc...) asparagine glycosylation is found at asparagine 116 and asparagine 147.

Exists either as monomer or, after proteolytic processing, as a dimer of two chains linked by disulfide bond(s). Fe cation serves as cofactor.

It localises to the lysosome. The enzyme catalyses a phosphate monoester + H2O = an alcohol + phosphate. The protein is Tartrate-resistant acid phosphatase type 5 (ACP5) of Oryctolagus cuniculus (Rabbit).